A 373-amino-acid chain; its full sequence is Phosphoserine aminotransferase (373 aa).

Arginine 47 is an L-glutamate binding site. Pyridoxal 5'-phosphate contacts are provided by residues 81 to 82 (AR), tryptophan 113, threonine 164, aspartate 185, and glutamine 208. Lysine 209 is modified (N6-(pyridoxal phosphate)lysine). 250–251 (NT) is a pyridoxal 5'-phosphate binding site.

It belongs to the class-V pyridoxal-phosphate-dependent aminotransferase family. SerC subfamily. In terms of assembly, homodimer. Pyridoxal 5'-phosphate is required as a cofactor.

Its subcellular location is the cytoplasm. It catalyses the reaction O-phospho-L-serine + 2-oxoglutarate = 3-phosphooxypyruvate + L-glutamate. The enzyme catalyses 4-(phosphooxy)-L-threonine + 2-oxoglutarate = (R)-3-hydroxy-2-oxo-4-phosphooxybutanoate + L-glutamate. It functions in the pathway amino-acid biosynthesis; L-serine biosynthesis; L-serine from 3-phospho-D-glycerate: step 2/3. The protein operates within cofactor biosynthesis; pyridoxine 5'-phosphate biosynthesis; pyridoxine 5'-phosphate from D-erythrose 4-phosphate: step 3/5. In terms of biological role, catalyzes the reversible conversion of 3-phosphohydroxypyruvate to phosphoserine and of 3-hydroxy-2-oxo-4-phosphonooxybutanoate to phosphohydroxythreonine. The sequence is that of Phosphoserine aminotransferase from Buchnera aphidicola subsp. Baizongia pistaciae (strain Bp).